A 21-amino-acid polypeptide reads, in one-letter code: KLSGCFGFKLDRIGTMSGLGC.

Residues Cys5 and Cys21 are joined by a disulfide bond.

Expressed by the venom gland.

The protein localises to the secreted. Functionally, scorpion venom natriuretic peptide that increases the perfusion pressure, glomerular filtration rate and urinary flow in the isolated perfused rat kidney assay. Induces a decrease of the percentages of renal transport for sodium, potassium and chloride and an increase of the urinary cGMP concentration. Also down-regulates the mRNA expression of natriuretic peptide receptor 1 (NPR1) in the kidneys whereas it up-regulates those of NPR2, NPR3 and guanylyl cyclase C (GUCY2C) mRNAs. May exhibit hypotensive and vasodepressor activities. This is Natriuretic peptide TsNP from Tityus serrulatus (Brazilian scorpion).